The following is a 136-amino-acid chain: Ig heavy chain V region XIG8 (136 aa).

A signal peptide spans 1–18 (GFGIFVIFMFFSPSCILS). Positions 19-128 (QTLQESGPGT…TAGYFEHWGQ (110 aa)) constitute an Ig-like domain.

The chain is Ig heavy chain V region XIG8 from Xenopus laevis (African clawed frog).